Reading from the N-terminus, the 175-residue chain is MQNTKLLLTSFTFVGLLALAGCSFPGVYKIDIQQGNVVTQDMIDQLRPGMTRRQVRFIMGNALLTDTFHADRWDYLYSLQPGGGERQQERVSVIFNGNDQLVSLSGDFMPGVSRDEALLGKDSGTNVTAPAQEAEKPKSEVPAKPGSLLDTIQKDIDNVETVPVPTPEPLDTSPQ.

The first 21 residues, 1–21 (MQNTKLLLTSFTFVGLLALAG), serve as a signal peptide directing secretion. A lipid anchor (N-palmitoyl cysteine) is attached at Cys22. Cys22 carries S-diacylglycerol cysteine lipidation. Disordered regions lie at residues 117–147 (ALLG…KPGS) and 156–175 (IDNV…TSPQ).

The protein belongs to the BamE family. As to quaternary structure, part of the Bam complex.

Its subcellular location is the cell outer membrane. Functionally, part of the outer membrane protein assembly complex, which is involved in assembly and insertion of beta-barrel proteins into the outer membrane. May have a structural role in maintaining the cell envelope integrity. This Pseudomonas fluorescens protein is Outer membrane protein assembly factor BamE.